The sequence spans 133 residues: Small ribosomal subunit protein uS8 (133 aa).

This sequence belongs to the universal ribosomal protein uS8 family. In terms of assembly, part of the 30S ribosomal subunit. Contacts proteins S5 and S12.

One of the primary rRNA binding proteins, it binds directly to 16S rRNA central domain where it helps coordinate assembly of the platform of the 30S subunit. This is Small ribosomal subunit protein uS8 from Synechococcus sp. (strain RCC307).